A 705-amino-acid chain; its full sequence is Probable iron-sulfur-binding oxidoreductase FadF (705 aa).

Transmembrane regions (helical) follow at residues 4–24, 71–91, 109–129, 146–166, 173–193, and 199–219; these read FLIANALLFLIVTAYAVYLFV, IIHVMFFYGFILVQFGAIDFI, AFTFFQEIVTFLILIAVGWAF, AGLVLIFIGGLMLTVLLGNGM, HGLSWSEPIASGIAFMLSGVG, and VIFYIAWWIHLLFLLSFLVYV. 4Fe-4S ferredoxin-type domains are found at residues 268 to 298 and 360 to 391; these read QSQLLDLYACVECGRCTNMCPATGTGKMLSP and GDVITEEEIWACTTCRNCEDQCPVMNEHVDKI. [4Fe-4S] cluster contacts are provided by cysteine 277, cysteine 280, cysteine 283, cysteine 287, cysteine 371, cysteine 374, cysteine 377, and cysteine 381.

[4Fe-4S] cluster is required as a cofactor.

Its subcellular location is the cell membrane. This is Probable iron-sulfur-binding oxidoreductase FadF (fadF) from Bacillus subtilis (strain 168).